The chain runs to 1709 residues: MQTSISTTTIEDHLHHYSPEESQKLLSRESSINTDLFKHENESVDLLLKEMNSTPSKLLPIDKHSHLQLQPQSSSASIFNSPTKPLNFPRTNSKPSLDPNSSSDTYTSEQDQEKGKEEKKDTAFQTSFDRNFDLDNSIDIQQTIQHQQQQPQQQQQLPQTDNNLIDEFSFQTPMTSTLDLTKQNPTVDKINENHAPTYINTSPNKSIMKKATPKASPKKVAFTATNPEIHHYPDNRVEEEDQSQQKEDSVEPPSIQHQWKDPSQFNYSDEDTNASVPPTPPLHTTKPTFAQLLNKNNEVNSEPEALTDMKLKHENFSNLSLDEKVNLYLSPTNNNNSKNVSDMDSHLQNLQDASKNKTNENIHNLSFALKAPKNDIENPLNSLTNADISLRSSGSSQSSLQSLRDDNRVLESTPGSPKKVNPGLSLNDGIKGFSDEVVESLLPRDLSRDKLETTKENDAPEHNNENFIDAKSTNTNKGQLLVSSDDHLDSFDRSYNHTEQSILNLLNSASQSQISLNALEKQKQIQEQEQTQAAEPEEETSFSDNIKVKQEPKSNLEFVKVTIKKEPVSATEIKAPKREFSSRILRIKNEDEIAEPADIHPKKENEANSHVEDTDALLKKALNDDEESDTTQNSTKMSIRFHIDSDWKLEDSNDGDREDNDDISRFEKSDILNDVSQTSDIIGDKYGNSSSEITTKTLAPPRSDNNDKENSKSFEDPANNESSQQQLEVPHTKEDDSILANSSNIAPPEELTLPVVEANDYSSFNDVTKTFDAYSSFEESLSREHETDSKPINFISIWHKQEKQKKHQIHKVPTKQIIASYQQYKNEQESRVTSDKVKIPNAIQSKKFKEVNVMSRRVVSPDMDDLNVSQFLPELSEDSGFKDLNFANYSNNTNRPRSFTPLSTKNVLSNIDNDPNVVEPPEPKSYAEIRNARRLSANKAAPNQAPPLPPQRQPSSTRSNSNKRVSRFRVPTFEIRRTSSALAPCDMYNDIFDDFGAGSKPTIKAEGMKTLPSMDKDDVKRILNAKKGVTQDEYINAKLVDQKPKKNSIVTDPEDRYEELQQTASIHNATIDSSIYGRPDSISTDMLPYLSDELKKPPTALLSADRLFMEQEVHPLRSNSVLVHPGAGAATNSSMLPEPDFELINSPTRNVSNNSDNVAISGNASTISFNQLDMNFDDQATIGQKIQEQPASKSANTVRGDDDGLASAPETPRTPTKKESISSKPAKLSSASPRKSPIKIGSPVRVIKKNGSIAGIEPIPKATHKPKKSFQGNEISNHKVRDGGISPSSGSEHQQHNPSMVSVPSQYTDATSTVPDENKDVQHKPREKQKQKHHHRHHHHKQKTDIPGVVDDEIPDVGLQERGKLFFRVLGIKNINLPDINTHKGRFTLTLDNGVHCVTTPEYNMDDHNVAIGKEFELTVADSLEFILTLKASYEKPRGTLVEVTEKKVVKSRNRLSRLFGSKDIITTTKFVPTEVKDTWANKFAPDGSFARCYIDLQQFEDQITGKALQFDLNCFNEWETMSNGNQPMKRGKPYKIAQLEVKMLYVPRSDPREILPTSIRSAYESINELNNEQNNYFEGYLHQEGGDCPIFKKRFFKLMGTSLLAHSEISHKTRAKINLSKVVDLIYVDKENIDRSNHRNFSDVLLLDHAFKIKFANGELIDFCAPNKHEMKIWIQNLQEIIYRNRFRRQPWVNLMLQQQQQQQSSQQ.

9 disordered regions span residues 1–27 (MQTS…KLLS), 67–125 (LQLQ…TAFQ), 192–281 (ENHA…PTPP), 387–429 (DISL…LNDG), 448–472 (RDKL…DAKS), 525–549 (IQEQ…IKVK), 595–746 (EPAD…SNIA), 937–968 (ANKA…VSRF), and 1186–1349 (IQEQ…IPGV). Basic and acidic residues predominate over residues 10–27 (IEDHLHHYSPEESQKLLS). A compositionally biased stretch (low complexity) spans 67–77 (LQLQPQSSSAS). A compositionally biased stretch (polar residues) spans 78–108 (IFNSPTKPLNFPRTNSKPSLDPNSSSDTYTS). Over residues 111-122 (DQEKGKEEKKDT) the composition is skewed to basic and acidic residues. Residues 255-267 (IQHQWKDPSQFNY) show a composition bias toward polar residues. Over residues 389–402 (SLRSSGSSQSSLQS) the composition is skewed to low complexity. Basic and acidic residues predominate over residues 448–464 (RDKLETTKENDAPEHNN). Basic and acidic residues-rich tracts occupy residues 595 to 623 (EPAD…KALN), 641 to 655 (FHID…SNDG), and 662 to 671 (DISRFEKSDI). Over residues 687–697 (GNSSSEITTKT) the composition is skewed to polar residues. Residues 704–715 (DNNDKENSKSFE) show a composition bias toward basic and acidic residues. The segment covering 953–962 (QPSSTRSNSN) has biased composition (low complexity). Over residues 1186–1197 (IQEQPASKSANT) the composition is skewed to polar residues. Over residues 1222 to 1235 (SSKPAKLSSASPRK) the composition is skewed to low complexity. The span at 1286 to 1315 (SPSSGSEHQQHNPSMVSVPSQYTDATSTVP) shows a compositional bias: polar residues. The segment covering 1325–1342 (PREKQKQKHHHRHHHHKQ) has biased composition (basic residues). The PH domain maps to 1575-1684 (NNYFEGYLHQ…WIQNLQEIIY (110 aa)).

It belongs to the BUD4 family.

Its subcellular location is the cell surface. The protein resides in the bud neck. It localises to the spore. The protein localises to the perispore. Required for establishment of the axial budding pattern in yeast cells. May be involved in the selection of future sites of septation in hyphal cells. Contributes to morphogenesis and is important for induction of hyphal growth. Also plays a role in epithelial adherence, and is involved in intestinal colonization and systemic infection. The role in adhesion is probably minor compared with its role in morphogenesis. This chain is Bud site selection protein BUD4 (BUD4), found in Candida albicans (strain SC5314 / ATCC MYA-2876) (Yeast).